The following is a 126-amino-acid chain: Methylglyoxal synthase (126 aa).

An MGS-like domain is found at 1–126; the sequence is MKALALIAHD…IAWIRKGTPQ (126 aa). Substrate is bound by residues histidine 9, lysine 13, 35 to 38, and 55 to 56; these read TGTT and SG. Residue aspartate 61 is the Proton donor/acceptor of the active site. Histidine 88 contributes to the substrate binding site.

The protein belongs to the methylglyoxal synthase family.

It catalyses the reaction dihydroxyacetone phosphate = methylglyoxal + phosphate. In terms of biological role, catalyzes the formation of methylglyoxal from dihydroxyacetone phosphate. The polypeptide is Methylglyoxal synthase (Thermus thermophilus (strain ATCC BAA-163 / DSM 7039 / HB27)).